Here is a 421-residue protein sequence, read N- to C-terminus: Phosphatidate cytidylyltransferase 1 (421 aa).

Methionine 1 carries the post-translational modification N-acetylmethionine. A compositionally biased stretch (polar residues) spans 1-12 (MEEENVTSSPST). The segment at 1–26 (MEEENVTSSPSTPVHRLRHRRRSNEV) is disordered. 8 helical membrane passes run 60–80 (IGGF…MVVV), 102–122 (LPYI…FVYG), 149–169 (YHMA…ILTL), 183–203 (WTHM…ANIF), 206–226 (IFWF…AYIF), 246–266 (GFIG…NILG), 321–341 (LCLG…ASGF), and 369–389 (VMAV…SVSV).

Belongs to the CDS family. Requires Mg(2+) as cofactor.

It is found in the membrane. The catalysed reaction is a 1,2-diacyl-sn-glycero-3-phosphate + CTP + H(+) = a CDP-1,2-diacyl-sn-glycerol + diphosphate. The protein operates within phospholipid metabolism; CDP-diacylglycerol biosynthesis; CDP-diacylglycerol from sn-glycerol 3-phosphate: step 3/3. In terms of biological role, may be involved in the synthesis of minor phospholipids and in modulation of IP3-mediated signal transduction. This chain is Phosphatidate cytidylyltransferase 1, found in Arabidopsis thaliana (Mouse-ear cress).